The following is a 112-amino-acid chain: uncharacterized protein (112 aa).

A helical membrane pass occupies residues 85–105; it reads IVQLIILFAIIITNPNAIELI.

It belongs to the M.jannaschii MJ0023/MJ0349/MJ1072/MJ1074/MJ1107/MJECL16 family.

The protein localises to the membrane. This is an uncharacterized protein from Methanocaldococcus jannaschii (strain ATCC 43067 / DSM 2661 / JAL-1 / JCM 10045 / NBRC 100440) (Methanococcus jannaschii).